The primary structure comprises 408 residues: Multidrug resistance protein MdtG (408 aa).

The next 11 helical transmembrane spans lie at 16–36 (LIVA…VMPF), 58–78 (IVFS…GGLA), 92–112 (LGMG…QFLI), 115–135 (ALLG…ATQV), 146–166 (TLST…GLLA), 173–193 (PVFF…LLCI), 224–244 (LFVT…ILTL), 253–273 (VGNI…AALL), 290–310 (ILIA…FVQT), 319–339 (FLLG…LVYN), and 378–398 (AVFL…WNSL).

Belongs to the major facilitator superfamily. DHA1 family. MdtG (TC 2.A.1.2.20) subfamily.

It localises to the cell inner membrane. Its function is as follows. Confers resistance to fosfomycin and deoxycholate. The chain is Multidrug resistance protein MdtG from Escherichia fergusonii (strain ATCC 35469 / DSM 13698 / CCUG 18766 / IAM 14443 / JCM 21226 / LMG 7866 / NBRC 102419 / NCTC 12128 / CDC 0568-73).